A 600-amino-acid polypeptide reads, in one-letter code: Aspartate--tRNA(Asp/Asn) ligase (600 aa).

Glu-174 is a binding site for L-aspartate. The interval 198-201 (QLFK) is aspartate. L-aspartate is bound at residue Arg-220. ATP is bound by residues 220–222 (RDE) and Gln-229. His-457 provides a ligand contact to L-aspartate. ATP is bound at residue Glu-491. Arg-498 is an L-aspartate binding site. 543–546 (GLDR) lines the ATP pocket.

Belongs to the class-II aminoacyl-tRNA synthetase family. Type 1 subfamily. As to quaternary structure, homodimer.

It localises to the cytoplasm. The catalysed reaction is tRNA(Asx) + L-aspartate + ATP = L-aspartyl-tRNA(Asx) + AMP + diphosphate. Its function is as follows. Aspartyl-tRNA synthetase with relaxed tRNA specificity since it is able to aspartylate not only its cognate tRNA(Asp) but also tRNA(Asn). Reaction proceeds in two steps: L-aspartate is first activated by ATP to form Asp-AMP and then transferred to the acceptor end of tRNA(Asp/Asn). The protein is Aspartate--tRNA(Asp/Asn) ligase of Burkholderia cenocepacia (strain ATCC BAA-245 / DSM 16553 / LMG 16656 / NCTC 13227 / J2315 / CF5610) (Burkholderia cepacia (strain J2315)).